Reading from the N-terminus, the 349-residue chain is Homeobox-leucine zipper protein HOX7 (349 aa).

A disordered region spans residues 42–186; it reads RATRRDEQDD…PKQKSDLANR (145 aa). Polar residues-rich tracts occupy residues 89–99 and 121–135; these read SAETGSANSEM and SSPSSMQEASTRQQV. The homeobox DNA-binding region spans 150–209; sequence GARKKLRLSKEQSSFLEDSFKEHSTLTPKQKSDLANRLNLRPRQVEVWFQNRRARTKLKQ. Residues 167 to 183 are compositionally biased toward basic and acidic residues; that stretch reads DSFKEHSTLTPKQKSDL. The segment at 208-252 is leucine-zipper; that stretch reads KQTEVDCEHLKRCCERLTRENRRLQREVAELRGALRTTTSSYPPL.

This sequence belongs to the HD-ZIP homeobox family. Class II subfamily. Homodimer. May form a heterodimer with HOX1, HOX2 or HOX3. As to expression, expressed in seedlings, roots, leaves, nodes, internodes, flowers and embryo.

Its subcellular location is the nucleus. Probable transcription factor that binds to the DNA sequence 5'-CAAT[GC]ATTG-3'. This chain is Homeobox-leucine zipper protein HOX7 (HOX7), found in Oryza sativa subsp. indica (Rice).